A 789-amino-acid chain; its full sequence is Ataxin-1 (789 aa).

Residues 1–30 (MKSNQERSNECLPPKKREIPATSRPSEEKA) are compositionally biased toward basic and acidic residues. The disordered stretch occupies residues 1–73 (MKSNQERSNE…GTSGEHGLQG (73 aa)). K16 participates in a covalent cross-link: Glycyl lysine isopeptide (Lys-Gly) (interchain with G-Cter in SUMO). S81 and S87 each carry phosphoserine. 2 disordered regions span residues 188 to 237 (QAPG…RATS) and 296 to 397 (EVLN…KPGH). Residue K193 forms a Glycyl lysine isopeptide (Lys-Gly) (interchain with G-Cter in SUMO) linkage. S213 is subject to Phosphoserine. T217 carries the phosphothreonine modification. Composition is skewed to polar residues over residues 218-235 (QQNQ…SGRA), 310-325 (ASSS…SSKS), and 360-386 (PNSS…TLND). S228 is modified (phosphoserine). The tract at residues 468–578 (VGSPDMDTPG…TEDFIQSAEI (111 aa)) is self-association. Residues 512-789 (LVTQAAYPAM…CIEGRSNVGK (278 aa)) form an interaction with USP7 region. The RNA-binding stretch occupies residues 514 to 740 (TQAAYPAMVQ…FLTKIEPSKP (227 aa)). The 132-residue stretch at 536–667 (SPAAASPTLP…SLTLKNLKNG (132 aa)) folds into the AXH domain. Glycyl lysine isopeptide (Lys-Gly) (interchain with G-Cter in SUMO) cross-links involve residues K583, K670, and K719. Positions 736–772 (EPSKPTATRKRRWSAPETRKLEKSEDEPPLTLPKPSL) are disordered. S749 is modified (phosphoserine). The short motif at 768–771 (PKPS) is the Nuclear localization signal element.

The protein belongs to the ATXN1 family. Homooligomer. Interacts with CIC. Interacts with ANP32A, PQBP1, UBQLN4, ATXN1L and USP7. Directly interacts with RBPJ; this interaction is disrupted in the presence of Notch intracellular domain. Competes with ATXN1L for RBPJ-binding. Found in a complex with CIC and ATXN1L. Ubiquitinated by UBE3A, leading to its degradation by the proteasome. Post-translationally, phosphorylation at Ser-749 increases the pathogenicity of proteins with an expanded polyglutamine tract. In terms of processing, sumoylation is dependent on nuclear localization and phosphorylation at Ser-749. It is reduced in the presence of an expanded polyglutamine tract.

The protein resides in the cytoplasm. It localises to the nucleus. Functionally, chromatin-binding factor that repress Notch signaling in the absence of Notch intracellular domain by acting as a CBF1 corepressor. Binds to the HEY promoter and might assist, along with NCOR2, RBPJ-mediated repression. Binds RNA in vitro. May be involved in RNA metabolism. In concert with CIC and ATXN1L, involved brain development. The chain is Ataxin-1 (Atxn1) from Rattus norvegicus (Rat).